The primary structure comprises 183 residues: Large ribosomal subunit protein uL5 (183 aa).

It belongs to the universal ribosomal protein uL5 family. As to quaternary structure, part of the 50S ribosomal subunit; part of the 5S rRNA/L5/L18/L25 subcomplex. Contacts the 5S rRNA and the P site tRNA. Forms a bridge to the 30S subunit in the 70S ribosome.

This is one of the proteins that bind and probably mediate the attachment of the 5S RNA into the large ribosomal subunit, where it forms part of the central protuberance. In the 70S ribosome it contacts protein S13 of the 30S subunit (bridge B1b), connecting the 2 subunits; this bridge is implicated in subunit movement. Contacts the P site tRNA; the 5S rRNA and some of its associated proteins might help stabilize positioning of ribosome-bound tRNAs. In Kosmotoga olearia (strain ATCC BAA-1733 / DSM 21960 / TBF 19.5.1), this protein is Large ribosomal subunit protein uL5.